The primary structure comprises 317 residues: Putative pyridoxal kinase BUD17 (317 aa).

Residues Ser-16 and Tyr-128 each contribute to the substrate site. ATP contacts are provided by residues 190–191 (TS) and 220–232 (EIPK…SGSG). Residue Asp-233 coordinates substrate.

It belongs to the pyridoxine kinase family. Requires a divalent metal cation as cofactor.

The protein localises to the cytoplasm. The protein resides in the nucleus. The catalysed reaction is pyridoxal + ATP = pyridoxal 5'-phosphate + ADP + H(+). In terms of biological role, required for synthesis of pyridoxal-5-phosphate from vitamin B6. Important for bud site selection. This chain is Putative pyridoxal kinase BUD17 (BUD17), found in Saccharomyces cerevisiae (strain ATCC 204508 / S288c) (Baker's yeast).